Reading from the N-terminus, the 199-residue chain is Putative 3-methyladenine DNA glycosylase (199 aa).

The protein belongs to the DNA glycosylase MPG family.

In Rhizobium etli (strain ATCC 51251 / DSM 11541 / JCM 21823 / NBRC 15573 / CFN 42), this protein is Putative 3-methyladenine DNA glycosylase.